Consider the following 264-residue polypeptide: MDTRPIGFLDSGVGGLTVVCELIRQLPHEKIVYIGDSARAPYGPRPKKQIKEYTWELVNFLLTQNVKMIVFACNTATAVAWEEVKAALDIPVLGVVLPGASAAIKSTTKGQVGVIGTPMTVASDIYRKKIQLLAPSIQVRSLACPKFVPIVESNEMCSSIAKKIVYDSLAPLVGKIDTLVLGCTHYPLLRPIIQNVMGPSVKLIDSGAECVRDISVLLNYFDINGNYHQKAVEHRFFTTANPEIFQEIASIWLKQKINVEHVTL.

Residues 10 to 11 (DS) and 42 to 43 (YG) each bind substrate. Cys73 acts as the Proton donor/acceptor in catalysis. Residue 74 to 75 (NT) coordinates substrate. Cys183 serves as the catalytic Proton donor/acceptor. Position 184-185 (184-185 (TH)) interacts with substrate.

Belongs to the aspartate/glutamate racemases family. In terms of assembly, homodimer.

The enzyme catalyses L-glutamate = D-glutamate. The protein operates within cell wall biogenesis; peptidoglycan biosynthesis. Its function is as follows. Provides the (R)-glutamate required for cell wall biosynthesis. The polypeptide is Glutamate racemase (Streptococcus pyogenes serotype M1).